The sequence spans 37 residues: Large ribosomal subunit protein bL36 (37 aa).

It belongs to the bacterial ribosomal protein bL36 family.

This Mycoplasma sp protein is Large ribosomal subunit protein bL36 (rpmJ).